The sequence spans 433 residues: D-amino acid dehydrogenase (433 aa).

FAD is bound at residue V3–Y17.

Belongs to the DadA oxidoreductase family. The cofactor is FAD.

It catalyses the reaction a D-alpha-amino acid + A + H2O = a 2-oxocarboxylate + AH2 + NH4(+). It participates in amino-acid degradation; D-alanine degradation; NH(3) and pyruvate from D-alanine: step 1/1. Its function is as follows. Oxidative deamination of D-amino acids. This is D-amino acid dehydrogenase from Pseudomonas savastanoi pv. phaseolicola (strain 1448A / Race 6) (Pseudomonas syringae pv. phaseolicola (strain 1448A / Race 6)).